We begin with the raw amino-acid sequence, 883 residues long: Glutamate receptor 2 (883 aa).

An N-terminal signal peptide occupies residues 1-24; that stretch reads MQKIMHISVLLSPILWGLIFGVSS. Residues 25 to 543 are Extracellular-facing; that stretch reads NSIQIGGLFP…GVFSFLDPLA (519 aa). C78 and C330 are disulfide-bonded. N-linked (GlcNAc...) asparagine glycosylation is found at N256, N370, N406, and N413. L-glutamate contacts are provided by P499, T501, and R506. Residues 544-564 form a helical membrane-spanning segment; sequence YEIWMCIVFAYIGVSVVLFLV. The Cytoplasmic portion of the chain corresponds to 565–591; sequence SRFSPYEWHTEEFEDGRETQSSESTNE. The helical; Pore-forming intramembrane region spans 592-607; that stretch reads FGIFNSLWFSLGAFMR. An intramembrane segment occupies 608 to 610; it reads QGC. A lipid anchor (S-palmitoyl cysteine) is attached at C610. The Cytoplasmic portion of the chain corresponds to 611 to 616; sequence DISPRS. Residues 617-637 traverse the membrane as a helical segment; that stretch reads LSGRIVGGVWWFFTLIIISSY. Over 638–812 the chain is Extracellular; sequence TANLAAFLTV…EKTSALSLSN (175 aa). L-glutamate-binding residues include S675 and T676. S683 bears the Phosphoserine; by PKC mark. The residue at position 717 (S717) is a Phosphoserine; by PKG. E726 is a binding site for L-glutamate. Cysteines 739 and 794 form a disulfide. Residues 813 to 833 form a helical membrane-spanning segment; it reads VAGVFYILVGGLGLAMLVALI. Over 834–883 the chain is Cytoplasmic; that stretch reads EFCYKSRAEAKRMKVAKNAQNINPSSSQNSQNFATYKEGYNVYGIESVKI. C836 is lipidated: S-palmitoyl cysteine. Phosphoserine is present on residues S860 and S863. The segment at 867–877 is required for interaction with IQSEC1; the sequence is ATYKEGYNVYG. At Y876 the chain carries Phosphotyrosine. S880 is subject to Phosphoserine.

It belongs to the glutamate-gated ion channel (TC 1.A.10.1) family. GRIA2 subfamily. Homotetramer or heterotetramer of pore-forming glutamate receptor subunits. Tetramers may be formed by the dimerization of dimers. May interact with MPP4. Forms a ternary complex with GRIP1 and CSPG4. Interacts with ATAD1 in an ATP-dependent manner. ATAD1-catalyzed ATP hydrolysis disrupts binding to ATAD1 and to GRIP1 and leads to AMPAR complex disassembly. Interacts with GRIP1 and GRIP2. Interacts with NSF via its C-terminus. Isoform 1, but not isoform 3, interacts with PICK1. Interacts with CACNG2. Interacts with GRIA1 and SYNDIG1. Part of a complex containing GRIA2, NSF and NAPA and/or NAPB. Interacts with SNX27 (via PDZ domain); the interaction is required for recycling to the plasma membrane when endocytosed and prevent degradation in lysosomes. Interacts with LRFN1. Found in a complex with GRIA1, GRIA3, GRIA4, CNIH2, CNIH3, CACNG2, CACNG3, CACNG4, CACNG5, CACNG7 and CACNG8. Interacts with CACNG5. Interacts with OLFM2. Interacts with AP4B1, AP4E1 and AP4M1; probably indirect it mediates the somatodendritic localization of GRIA2 in neurons. Forms a complex with GRIP1, NSG1 and STX12; controls the intracellular fate of AMPAR and the endosomal sorting of the GRIA2 subunit toward recycling and membrane targeting. Interacts with IQSEC1; the interaction is required for ARF6 activation. Interacts (heterotetramer form) with CNIH2 and CNIH3; this interaction promotes expression at the plasma membrane and extensively modulates their gating properties by slowing deactivation and desensitization kinetics. Phosphorylation at Tyr-876 is required for interaction with IQSEC1 and ARF6 activation, which in turn triggers AMPAR internalization for persistent synaptic depression. In terms of processing, palmitoylated. Depalmitoylated upon L-glutamate stimulation. ZDHHC3/GODZ specifically palmitoylates Cys-610, which leads to Golgi retention and decreased cell surface expression. In contrast, Cys-836 palmitoylation does not affect cell surface expression but regulates stimulation-dependent endocytosis. Post-translationally, N-glycosylated. Ubiquitinated by RNF167, leading to its degradation.

Its subcellular location is the cell membrane. It localises to the postsynaptic cell membrane. The protein localises to the postsynaptic density membrane. It catalyses the reaction Ca(2+)(in) = Ca(2+)(out). It carries out the reaction Na(+)(in) = Na(+)(out). In terms of biological role, ionotropic glutamate receptor that functions as a ligand-gated cation channel, gated by L-glutamate and glutamatergic agonists such as alpha-amino-3-hydroxy-5-methyl-4-isoxazolepropionic acid (AMPA), quisqualic acid, and kainic acid. L-glutamate acts as an excitatory neurotransmitter at many synapses in the central nervous system and plays an important role in fast excitatory synaptic transmission. Binding of the excitatory neurotransmitter L-glutamate induces a conformation change, leading to the opening of the cation channel, and thereby converts the chemical signal to an electrical impulse upon entry of monovalent and divalent cations such as sodium and calcium. The receptor then desensitizes rapidly and enters in a transient inactive state, characterized by the presence of bound agonist. In the presence of CACNG4 or CACNG7 or CACNG8, shows resensitization which is characterized by a delayed accumulation of current flux upon continued application of L-glutamate. Through complex formation with NSG1, GRIP1 and STX12 controls the intracellular fate of AMPAR and the endosomal sorting of the GRIA2 subunit toward recycling and membrane targeting. The sequence is that of Glutamate receptor 2 from Macaca fascicularis (Crab-eating macaque).